Here is a 255-residue protein sequence, read N- to C-terminus: Ribonuclease HII (255 aa).

The RNase H type-2 domain maps to 70–255 (DLVAGIDEVG…FEPVPEFLIK (186 aa)). A divalent metal cation-binding residues include D76, E77, and D168.

The protein belongs to the RNase HII family. It depends on Mn(2+) as a cofactor. The cofactor is Mg(2+).

It is found in the cytoplasm. It catalyses the reaction Endonucleolytic cleavage to 5'-phosphomonoester.. Functionally, endonuclease that specifically degrades the RNA of RNA-DNA hybrids. The chain is Ribonuclease HII from Pediococcus pentosaceus (strain ATCC 25745 / CCUG 21536 / LMG 10740 / 183-1w).